Here is a 95-residue protein sequence, read N- to C-terminus: MPKLAVVLLVLLILPLSYFDAAGGQAVQGDWRGNRLARDLQRGGRDDESECIINTRDSPWGRCCRTRMCGSMCCPRNGCTCVYHWRRGHGCSCPG.

A signal peptide spans 1–24 (MPKLAVVLLVLLILPLSYFDAAGG). The propeptide occupies 25–45 (QAVQGDWRGNRLARDLQRGGR). E48 and E50 each carry 4-carboxyglutamate. Position 59 is a 4-hydroxyproline; partial (P59). 4 disulfide bridges follow: C64–C73, C69–C81, C74–C91, and C79–C93. Position 75 is a 4-hydroxyproline; partial (P75). P94 carries the 4-hydroxyproline; partial modification. A Proline amide; in form [desGly-95]VxXXB modification is found at P94.

This sequence belongs to the conotoxin D superfamily. As to quaternary structure, homodimer. Pseudo-homodimer (identical sequence, different post-translational modifications). As to expression, expressed by the venom duct.

Its subcellular location is the secreted. Its function is as follows. Alpha-conotoxins act on postsynaptic membranes, they bind to the nicotinic acetylcholine receptors (nAChR) and thus inhibit them. Through its two C-terminal domains, this homodimeric protein would bind to two nAChR allosteric sites, located outside the nAChR C-loop of the principal binding face and at the adjacent binding interface in a clockwise direction. It specifically blocks mammalian neuronal nAChR of the alpha-7/CHRNA7 (IC(50)=0.4 nM), alpha-3-beta-2/CHRNA3-CHRNB2 (IC(50)=8.4 nM) and alpha-4-beta-2/CHRNA4-CHRNB2 (IC(50)=228 nM) subtypes. It inhibits alpha-7/CHRNA7, alpha-3-beta-2/CHRNA3-CHRNB2 and alpha-4-beta-2/CHRNA4-CHRNB2 nAChR subtypes more efficiently than VxXXA and VxXXC. The chain is Alpha-conotoxin VxXXB from Conus vexillum (Flag cone).